Consider the following 166-residue polypeptide: Lipoprotein signal peptidase (166 aa).

3 helical membrane passes run 12-32 (WLWL…LILQ), 70-90 (WFFA…MYRS), and 102-122 (ALII…GFVV). Catalysis depends on residues Asp-123 and Asp-141. A helical transmembrane segment spans residues 137–157 (FNLADSAICIGAALIVLEGFL).

It belongs to the peptidase A8 family.

It is found in the cell inner membrane. The catalysed reaction is Release of signal peptides from bacterial membrane prolipoproteins. Hydrolyzes -Xaa-Yaa-Zaa-|-(S,diacylglyceryl)Cys-, in which Xaa is hydrophobic (preferably Leu), and Yaa (Ala or Ser) and Zaa (Gly or Ala) have small, neutral side chains.. The protein operates within protein modification; lipoprotein biosynthesis (signal peptide cleavage). In terms of biological role, this protein specifically catalyzes the removal of signal peptides from prolipoproteins. This is Lipoprotein signal peptidase from Salmonella agona (strain SL483).